The primary structure comprises 91 residues: Elongation factor 1-beta (91 aa).

The protein belongs to the EF-1-beta/EF-1-delta family.

Promotes the exchange of GDP for GTP in EF-1-alpha/GDP, thus allowing the regeneration of EF-1-alpha/GTP that could then be used to form the ternary complex EF-1-alpha/GTP/AAtRNA. The polypeptide is Elongation factor 1-beta (Thermofilum pendens (strain DSM 2475 / Hrk 5)).